The following is a 3177-amino-acid chain: Proliferation marker protein Ki-67 (3177 aa).

The region spanning 27–76 (CLFGRSIECDIRIQLPVVSKRHCKIEVKEQEAILYNFSSTNPTQVNGVTI) is the FHA domain. Basic and acidic residues-rich tracts occupy residues 98–107 (EDGNHEDGSK) and 116–126 (LGKEPSRRASR). Disordered stretches follow at residues 98–442 (EDGN…PGLS) and 473–572 (RPEL…ASIS). Phosphoserine occurs at positions 125, 128, and 162. Composition is skewed to polar residues over residues 165–177 (SDGSKNSVSQDSS) and 202–221 (STGSSYREPKSSPTQSLSNS). Residues 235–263 (MKEELDVKSQKSCRKSEPQPDRAAEESRE) are compositionally biased toward basic and acidic residues. Residue lysine 236 forms a Glycyl lysine isopeptide (Lys-Gly) (interchain with G-Cter in SUMO2) linkage. Serine 250, serine 276, serine 277, serine 286, and serine 287 each carry phosphoserine. Over residues 276-286 (SSGSTPVTAAS) the composition is skewed to polar residues. 2 positions are modified to phosphothreonine: threonine 307 and threonine 316. Phosphoserine occurs at positions 321, 337, 373, 498, 503, and 588. Positions 455–618 (KSEGMPMKRR…VKQTQTKVAK (164 aa)) are positively charged patch (CP). Residues 462–509 (KRRRVSFGGHLRPELFDENLPPNTPLKRGETPTKRKSLGTHSPAVLKT) form the PP1-binding domain. Residues 614 to 652 (TKVAKHVPQKQTSKRQRRPSTPKKPTSNLHNQFTTGHAN) are disordered. The span at 616-634 (VAKHVPQKQTSKRQRRPST) shows a compositional bias: basic residues. Residues 636–652 (KKPTSNLHNQFTTGHAN) are compositionally biased toward polar residues. The residue at position 701 (threonine 701) is a Phosphothreonine. 3 disordered regions span residues 793-815 (LEKKTPVSETEPLKTASSVSKLR), 835-901 (VLAE…LGSQ), and 956-989 (KHSPKTPGKKAQPLEGPAGLKEHFETPNPKDKPI). Residues 855 to 864 (DQQVQDNENA) are compositionally biased toward polar residues. Basic and acidic residues-rich tracts occupy residues 867–882 (RCKESGELSEGSEKTS) and 975–989 (LKEHFETPNPKDKPI). 16 K167R repeats span residues 994–1101 (TRVL…FISP), 1108–1216 (KKIP…FQTP), 1228–1336 (SAKI…FQTP), 1348–1450 (SAKM…FQIP), 1461–1569 (KTKK…FQMP), 1582–1684 (TMLA…LFQT), 1696–1806 (KQTR…FQTP), 1817–1925 (ETTK…FQTP), 1937–2046 (SAKI…FQTP), 2059–2163 (VKMS…FQTP), 2175–2284 (SAKM…FQTP), 2296–2405 (SAKI…VFQT), 2419–2526 (AKLP…CQAP), 2537–2639 (KTPK…SFQE), 2643–2748 (KRIS…PIQT), and 2762–2870 (TQMP…ITQI). Residues lysine 1013 and lysine 1026 each participate in a glycyl lysine isopeptide (Lys-Gly) (interchain with G-Cter in SUMO2) cross-link. Serine 1062 is subject to Phosphoserine. A Glycyl lysine isopeptide (Lys-Gly) (interchain with G-Cter in SUMO1); alternate cross-link involves residue lysine 1082. Residue lysine 1082 forms a Glycyl lysine isopeptide (Lys-Gly) (interchain with G-Cter in SUMO2); alternate linkage. Disordered stretches follow at residues 1109–1321 (KIPS…IRAQ) and 1334–1410 (QTPA…ENDC). Position 1114 is a phosphoserine (serine 1114). The segment covering 1114–1127 (SPHTQPVRTPASTK) has biased composition (polar residues). Threonine 1122 carries the post-translational modification Phosphothreonine. Phosphoserine is present on serine 1125. Position 1150 is a phosphothreonine (threonine 1150). Serine 1152 carries the phosphoserine modification. Phosphothreonine is present on residues threonine 1159 and threonine 1175. Serine 1189 carries the phosphoserine modification. Threonine 1215 carries the phosphothreonine modification. Position 1235 is a phosphoserine (serine 1235). Phosphothreonine is present on residues threonine 1243, threonine 1279, threonine 1295, threonine 1307, and threonine 1315. A compositionally biased stretch (basic residues) spans 1308–1317 (GHKRRPRTPK). Lysine 1317 is covalently cross-linked (Glycyl lysine isopeptide (Lys-Gly) (interchain with G-Cter in SUMO2)). Threonine 1335 bears the Phosphothreonine mark. Residues 1353-1368 (LESSQAEPVKTPASTK) are compositionally biased toward polar residues. A Phosphoserine modification is found at serine 1356. Threonine 1363 bears the Phosphothreonine mark. Serine 1366 bears the Phosphoserine mark. Basic and acidic residues predominate over residues 1371–1384 (SKTDLSKVDVREDP). Phosphothreonine is present on residues threonine 1400 and threonine 1416. A Phosphoserine modification is found at serine 1469. Position 1477 is a phosphothreonine (threonine 1477). Serine 1480 is subject to Phosphoserine. Threonine 1513 carries the post-translational modification Phosphothreonine. Residues 1526-1550 (RKPAKRKLDSTAGMPNSKRMRCSSK) are disordered. Phosphoserine occurs at positions 1542 and 1587. N6-acetyllysine is present on lysine 1609. Lysine 1668 participates in a covalent cross-link: Glycyl lysine isopeptide (Lys-Gly) (interchain with G-Cter in SUMO2). Threonine 1684 and threonine 1712 each carry phosphothreonine. The residue at position 1734 (serine 1734) is a Phosphoserine. Positions 1749-1797 (IPIGPEDDTENKGVKESTPQTLDSSASRTVSKRQQGAHEERPQFSGDLF) are disordered. Residues 1765-1782 (STPQTLDSSASRTVSKRQ) show a composition bias toward polar residues. Threonine 1766 carries the phosphothreonine modification. A Phosphoserine modification is found at serine 1779. Threonine 1805 is modified (phosphothreonine). At serine 1825 the chain carries Phosphoserine. A phosphothreonine mark is found at threonine 1859, threonine 1868, threonine 1884, and threonine 1924. The interval 1925-2033 (PAGASDPVSV…QTPKIRAQPL (109 aa)) is disordered. Serine 1944 carries the post-translational modification Phosphoserine. At lysine 1966 the chain carries N6-acetyllysine. Phosphothreonine is present on residues threonine 1989, threonine 2005, and threonine 2025. A Glycyl lysine isopeptide (Lys-Gly) (interchain with G-Cter in SUMO1); alternate cross-link involves residue lysine 2027. Residue lysine 2027 forms a Glycyl lysine isopeptide (Lys-Gly) (interchain with G-Cter in SUMO2); alternate linkage. Phosphothreonine is present on threonine 2045. The segment at 2047–2112 (AGANDSVTVE…SPGTPAPVQE (66 aa)) is disordered. Over residues 2063–2078 (LESSQAEPVKTPASTK) the composition is skewed to polar residues. Serine 2065 is modified (phosphoserine). Phosphothreonine is present on threonine 2073. Serine 2076, serine 2095, and serine 2103 each carry phosphoserine. Residues 2088 to 2101 (VDVREDPSILEKKT) show a composition bias toward basic and acidic residues. Phosphothreonine occurs at positions 2106 and 2122. The interval 2124 to 2343 (KQKLDFTGNS…PLSKSSCASQ (220 aa)) is disordered. Positions 2135–2144 (GHKRRPRTPK) are enriched in basic residues. Threonine 2162 carries the phosphothreonine modification. The span at 2180–2195 (LESSQAKPVKTPASTK) shows a compositional bias: polar residues. Serine 2182 bears the Phosphoserine mark. The residue at position 2190 (threonine 2190) is a Phosphothreonine. Position 2198 is a phosphoserine (serine 2198). Threonine 2218 carries the phosphothreonine modification. Serine 2220 carries the phosphoserine modification. Threonine 2227, threonine 2243, and threonine 2283 each carry phosphothreonine. Serine 2303 is modified (phosphoserine). Threonine 2311 and threonine 2348 each carry phosphothreonine. Positions 2378 to 2390 (RGKRQQRSCKKRS) are enriched in basic residues. Residues 2378–2447 (RGKRQQRSCK…RRQARTGLRK (70 aa)) form a disordered region. 2 positions are modified to phosphoserine: serine 2390 and serine 2392. Phosphothreonine is present on threonine 2405. A phosphoserine mark is found at serine 2423 and serine 2425. Residue lysine 2451 forms a Glycyl lysine isopeptide (Lys-Gly) (interchain with G-Cter in SUMO1) linkage. A phosphoserine mark is found at serine 2464, serine 2487, serine 2545, and serine 2592. A compositionally biased stretch (basic and acidic residues) spans 2538 to 2547 (TPKMPDKSPE). Disordered stretches follow at residues 2538–2828 (TPKM…QVSK) and 2879–3160 (HDTS…DAKT). Over residues 2605–2622 (VQKQDPSVSLTGRRNQPR) the composition is skewed to polar residues. Serine 2649 bears the Phosphoserine mark. 2 stretches are compositionally biased toward basic and acidic residues: residues 2673-2697 (GVKEEPTAQRKQPSRETRNTLKEPV) and 2704-2714 (EEVKKSTKQKI). Lysine 2675 is covalently cross-linked (Glycyl lysine isopeptide (Lys-Gly) (interchain with G-Cter in SUMO1); alternate). Residue lysine 2675 forms a Glycyl lysine isopeptide (Lys-Gly) (interchain with G-Cter in SUMO2); alternate linkage. Polar residues-rich tracts occupy residues 2764 to 2781 (MPCNSLQPEQVDSFQSSP) and 2883 to 2892 (ILKSTQQQKP). Phosphoserine is present on residues serine 2768 and serine 2780. Basic and acidic residues predominate over residues 2907-2923 (ASKEDPKEVLVDTRDHA). Residue lysine 2909 forms a Glycyl lysine isopeptide (Lys-Gly) (interchain with G-Cter in SUMO2) linkage. An N6-acetyllysine modification is found at lysine 2928. Residues 2959–2971 (EATDEKPVPEKKR) are compositionally biased toward basic and acidic residues. 2973–2980 (ASSKRHVS) is an ATP binding site. A Phosphoserine modification is found at serine 2980. The segment covering 3008-3018 (KTEEMEAKREN) has biased composition (basic and acidic residues). Position 3021 is a phosphothreonine (threonine 3021). The span at 3039–3057 (PKFDASAENVGIKKNEKTM) shows a compositional bias: basic and acidic residues. Positions 3058–3067 (KTASQETELQ) are enriched in polar residues. Serine 3061 is subject to Phosphoserine. Basic and acidic residues-rich tracts occupy residues 3118 to 3132 (PQEEKGVSGESDVRC) and 3140 to 3160 (VALDSEPKPRVTRGTKKDAKT).

As to quaternary structure, interacts with KIF15. Interacts (via the FHA domain) with NIFK. Interacts with PPP1CC. Component of a complex at least composed of ZNF335, HCFC1, CCAR2, EMSY, MKI67, RBBP5, ASH2L and WDR5; the complex is formed as a result of interactions between components of a nuclear receptor-mediated transcription complex and a histone methylation complex. Interacts with ZNF335. Post-translationally, hyperphosphorylated by CDK1 in mitosis; hyperphosphorylatiom prevents undergoing liquid-liquid phase separation. Dephosphorylated by PPP1CC at the onset of anaphase. Dephosphorylation by protein phosphatase 2A (PP2A) and simultaneous exposure of the positively charged patch (CP) during mitotic exit induce the RNA-dependent formation of a liquid-like condensed phase on the chromosome surface. Ubiquitinated by the APC/C complex after neuronal progenitors exit mitosis during brain development, leading to clearance from constitutive heterochromatin. As to expression, mainly present in proliferating cells (at protein level).

It is found in the chromosome. It localises to the nucleus. The protein localises to the nucleolus. Its function is as follows. Protein that associates with the surface of mitotic chromosomes and acts both as a chromosome repellent during early mitosis and chromosome attractant during late mitosis. Required to maintain individual mitotic chromosomes dispersed in the cytoplasm following nuclear envelope disassembly. During early mitosis, relocalizes from nucleoli to the chromosome surface where it forms extended brush structures that cover a substantial fraction of the chromosome surface. The MKI67 brush structure prevents chromosomes from collapsing into a single chromatin mass by forming a steric and electrostatic charge barrier: the protein has a high net electrical charge and acts as a surfactant, dispersing chromosomes and enabling independent chromosome motility. During mitotic anaphase, the MKI67 brush structure collapses and MKI67 switches from a chromosome repellent to a chromosome attractant to promote chromosome clustering and facilitate the exclusion of large cytoplasmic particles from the future nuclear space. Mechanistically, dephosphorylation during mitotic exit and simultaneous exposure of a conserved basic patch induce the RNA-dependent formation of a liquid-like condensed phase on the chromosome surface, promoting coalescence of neighboring chromosome surfaces and clustering of chromosomes. Binds premature ribosomal RNAs during anaphase; promoting liquid-liquid phase separation. Binds DNA, with a preference for supercoiled DNA and AT-rich DNA. Does not contribute to the internal structure of mitotic chromosomes. May play a role in chromatin organization; it is however unclear whether it plays a direct role in chromatin organization or whether it is an indirect consequence of its function in mitotic chromosome. The polypeptide is Proliferation marker protein Ki-67 (Mus musculus (Mouse)).